The sequence spans 453 residues: Phosphatidylserine decarboxylase proenzyme 1, mitochondrial (453 aa).

Residues M1–F29 constitute a mitochondrion transit peptide. Residues S30–P74 lie on the Mitochondrial matrix side of the membrane. Residues G75–Y93 form a helical membrane-spanning segment. Residues E94–E453 lie on the Mitochondrial intermembrane side of the membrane. Residues D199, H296, and S408 each act as charge relay system; for autoendoproteolytic cleavage activity in the active site. S408 serves as the catalytic Schiff-base intermediate with substrate; via pyruvic acid; for decarboxylase activity. A Pyruvic acid (Ser); by autocatalysis modification is found at S408.

It belongs to the phosphatidylserine decarboxylase family. PSD-B subfamily. Eukaryotic type I sub-subfamily. As to quaternary structure, heterodimer of a large membrane-associated beta subunit and a small pyruvoyl-containing alpha subunit. Pyruvate is required as a cofactor. In terms of processing, is synthesized initially as an inactive proenzyme. Formation of the active enzyme involves a self-maturation process in which the active site pyruvoyl group is generated from an internal serine residue via an autocatalytic post-translational modification. Two non-identical subunits are generated from the proenzyme in this reaction, and the pyruvate is formed at the N-terminus of the alpha chain, which is derived from the carboxyl end of the proenzyme. The autoendoproteolytic cleavage occurs by a canonical serine protease mechanism, in which the side chain hydroxyl group of the serine supplies its oxygen atom to form the C-terminus of the beta chain, while the remainder of the serine residue undergoes an oxidative deamination to produce ammonia and the pyruvoyl prosthetic group on the alpha chain. During this reaction, the Ser that is part of the protease active site of the proenzyme becomes the pyruvoyl prosthetic group, which constitutes an essential element of the active site of the mature decarboxylase. As to expression, expressed in roots, leaves, stems and flowers.

It is found in the mitochondrion. Its subcellular location is the mitochondrion inner membrane. It catalyses the reaction a 1,2-diacyl-sn-glycero-3-phospho-L-serine + H(+) = a 1,2-diacyl-sn-glycero-3-phosphoethanolamine + CO2. Its pathway is phospholipid metabolism; phosphatidylethanolamine biosynthesis; phosphatidylethanolamine from CDP-diacylglycerol: step 2/2. In terms of biological role, catalyzes the formation of phosphatidylethanolamine (PtdEtn) from phosphatidylserine (PtdSer). Plays a central role in phospholipid metabolism and in the interorganelle trafficking of phosphatidylserine. Contributes only to a minor proportion of PtdEtn production. The sequence is that of Phosphatidylserine decarboxylase proenzyme 1, mitochondrial (PSD1) from Arabidopsis thaliana (Mouse-ear cress).